Reading from the N-terminus, the 503-residue chain is Probable cytosol aminopeptidase (503 aa).

Mn(2+)-binding residues include lysine 274 and aspartate 279. The active site involves lysine 286. Residues aspartate 297, aspartate 356, and glutamate 358 each coordinate Mn(2+). Residue arginine 360 is part of the active site.

It belongs to the peptidase M17 family. Mn(2+) serves as cofactor.

The protein resides in the cytoplasm. It catalyses the reaction Release of an N-terminal amino acid, Xaa-|-Yaa-, in which Xaa is preferably Leu, but may be other amino acids including Pro although not Arg or Lys, and Yaa may be Pro. Amino acid amides and methyl esters are also readily hydrolyzed, but rates on arylamides are exceedingly low.. It carries out the reaction Release of an N-terminal amino acid, preferentially leucine, but not glutamic or aspartic acids.. Presumably involved in the processing and regular turnover of intracellular proteins. Catalyzes the removal of unsubstituted N-terminal amino acids from various peptides. The chain is Probable cytosol aminopeptidase from Paraburkholderia phymatum (strain DSM 17167 / CIP 108236 / LMG 21445 / STM815) (Burkholderia phymatum).